Reading from the N-terminus, the 156-residue chain is MKIILNQDVKILGEEGDVKEVAAGYFRNYLYPRNLAVPHNRFTVARFKQRQQDIEMRKSLKRQDAANLKARLEAQPVVIAMPAGTNGKLYGAVTSHTVAEQLACMGFEVERKRVEVPGLTLKCVGNYHVTIRLYEEICAVVPVTIKNQSEADSVSE.

Belongs to the bacterial ribosomal protein bL9 family.

Binds to the 23S rRNA. The protein is Large ribosomal subunit protein bL9 of Treponema pallidum (strain Nichols).